Here is a 729-residue protein sequence, read N- to C-terminus: Phosphoribosylformylglycinamidine synthase subunit PurL (729 aa).

H54 is a catalytic residue. 2 residues coordinate ATP: Y57 and K96. E98 is a binding site for Mg(2+). Substrate is bound by residues 99-102 (SHNH) and R121. Residue H100 is the Proton acceptor of the active site. Mg(2+) is bound at residue D122. Q245 provides a ligand contact to substrate. A Mg(2+)-binding site is contributed by D273. 317–319 (ETQ) serves as a coordination point for substrate. Residues D495 and G532 each contribute to the ATP site. N533 is a Mg(2+) binding site. Position 535 (S535) interacts with substrate.

It belongs to the FGAMS family. As to quaternary structure, monomer. Part of the FGAM synthase complex composed of 1 PurL, 1 PurQ and 2 PurS subunits.

Its subcellular location is the cytoplasm. It carries out the reaction N(2)-formyl-N(1)-(5-phospho-beta-D-ribosyl)glycinamide + L-glutamine + ATP + H2O = 2-formamido-N(1)-(5-O-phospho-beta-D-ribosyl)acetamidine + L-glutamate + ADP + phosphate + H(+). Its pathway is purine metabolism; IMP biosynthesis via de novo pathway; 5-amino-1-(5-phospho-D-ribosyl)imidazole from N(2)-formyl-N(1)-(5-phospho-D-ribosyl)glycinamide: step 1/2. Functionally, part of the phosphoribosylformylglycinamidine synthase complex involved in the purines biosynthetic pathway. Catalyzes the ATP-dependent conversion of formylglycinamide ribonucleotide (FGAR) and glutamine to yield formylglycinamidine ribonucleotide (FGAM) and glutamate. The FGAM synthase complex is composed of three subunits. PurQ produces an ammonia molecule by converting glutamine to glutamate. PurL transfers the ammonia molecule to FGAR to form FGAM in an ATP-dependent manner. PurS interacts with PurQ and PurL and is thought to assist in the transfer of the ammonia molecule from PurQ to PurL. The protein is Phosphoribosylformylglycinamidine synthase subunit PurL of Staphylococcus carnosus (strain TM300).